Here is a 267-residue protein sequence, read N- to C-terminus: Tryptophan synthase alpha chain (267 aa).

Residues Glu-47 and Asp-58 each act as proton acceptor in the active site.

The protein belongs to the TrpA family. In terms of assembly, tetramer of two alpha and two beta chains.

The enzyme catalyses (1S,2R)-1-C-(indol-3-yl)glycerol 3-phosphate + L-serine = D-glyceraldehyde 3-phosphate + L-tryptophan + H2O. It functions in the pathway amino-acid biosynthesis; L-tryptophan biosynthesis; L-tryptophan from chorismate: step 5/5. Functionally, the alpha subunit is responsible for the aldol cleavage of indoleglycerol phosphate to indole and glyceraldehyde 3-phosphate. This chain is Tryptophan synthase alpha chain, found in Chlorobium phaeobacteroides (strain DSM 266 / SMG 266 / 2430).